Reading from the N-terminus, the 134-residue chain is Replication enhancer protein (134 aa).

This sequence belongs to the geminiviridae replication enhancer protein family. As to quaternary structure, homooligomer. Interacts with the replication-associated protein (REP). Interacts with host proliferating cell nuclear antigen (PCNA). Interacts with host retinoblastoma-related protein 1 (RBR1), and may thereby deregulate the host cell cycle. Oligomerization and interaction with PCNA are necessary for optimal replication enhancement.

Increases viral DNA accumulation. Enhances infectivity and symptom expression. This is Replication enhancer protein from Solanum lycopersicum (Tomato).